We begin with the raw amino-acid sequence, 419 residues long: Gamma-glutamyl phosphate reductase (419 aa).

Belongs to the gamma-glutamyl phosphate reductase family.

It localises to the cytoplasm. It catalyses the reaction L-glutamate 5-semialdehyde + phosphate + NADP(+) = L-glutamyl 5-phosphate + NADPH + H(+). It participates in amino-acid biosynthesis; L-proline biosynthesis; L-glutamate 5-semialdehyde from L-glutamate: step 2/2. In terms of biological role, catalyzes the NADPH-dependent reduction of L-glutamate 5-phosphate into L-glutamate 5-semialdehyde and phosphate. The product spontaneously undergoes cyclization to form 1-pyrroline-5-carboxylate. The polypeptide is Gamma-glutamyl phosphate reductase (Bordetella avium (strain 197N)).